We begin with the raw amino-acid sequence, 1666 residues long: Complement C3 (1666 aa).

The N-terminal stretch at 1–22 (MGPAAGPSLLLLLLASVSLALG) is a signal peptide. Phosphoserine occurs at positions 70, 296, and 302. Disulfide bonds link C557–C821, C630–C666, C698–C725, C699–C732, C712–C733, C878–C1517, C1106–C1163, C1363–C1493, C1394–C1462, C1510–C1515, C1522–C1593, C1540–C1664, and C1640–C1649. Residue S676 is modified to Phosphoserine. The region spanning 698–733 (CCEDGMRENPMQFSCQRRARYVSLGEACVKAFLDCC) is the Anaphylatoxin-like domain. N-linked (GlcNAc...) asparagine glycosylation is present at N944. S973 carries the phosphoserine modification. Positions 1015 to 1018 (CGEQ) form a cross-link, isoglutamyl cysteine thioester (Cys-Gln). A Phosphoserine modification is found at S1326. The 143-residue stretch at 1522-1664 (CFIQLPEKIT…FTENMVVFGC (143 aa)) folds into the NTR domain. Position 1576 is a phosphoserine (S1576). A glycan (N-linked (GlcNAc...) asparagine) is linked at N1620. The interaction with CFP/properdin stretch occupies residues 1637–1662 (AEECQDEENQQQCQDLGTFTENMVVF).

In absence of complement activation, the C3 precursor is first processed by the removal of 4 Arg residues, forming two chains, beta and alpha, linked by a disulfide bond. In terms of assembly, complement C3b is composed of complement C3b and complement C3 beta chains that are associated via disulfide bonds. Non-enzymatic component of the C5 convertase, also named C4bC2bC3b, composed of the serine protease complement C2b (C2), complement C3b, as well as complement C4b (C4). Non-enzymatic component of the C5 convertase of the alternative complement pathways composed of the serine protease complement CFB and complement C3b. Interacts with CFP; interaction takes place together with CFB in the alternative complement system and allows the complex to become active. Interacts with CR1 (via Sushi 8 and Sushi 9 domains). Interacts with CFH. As to quaternary structure, interacts with CFH. Interacts with CR2. During pregnancy, C3dg exists as a complex (probably a 2:2:2 heterohexamer) with AGT and the proform of PRG2. Interacts with CR2 (via the N-terminal Sushi domains 1 and 2). C3 precursor is first processed by the removal of 4 Arg residues, forming two chains, beta and alpha, linked by a disulfide bond. During activation of the complement systems, the alpha chain is cleaved into C3a and C3b by the C3 convertase: C3b stays linked to the beta chain, while C3a is released in the plasma. The alpha chain is cleaved by the serine protease complement C2b component of the C3 convertase to generate C3a and C3b following activation by the classical, lectin and GZMK complement systems. The alpha chain is cleaved by CFB component of the C3 convertase to generate C3a and C3b following activation by the alternative complement system. In terms of processing, C3a is further processed by carboxypeptidases to release the C-terminal arginine residue generating the acylation stimulating protein (ASP). Levels of ASP are increased in adipocytes in the postprandial period and by insulin and dietary chylomicrons. Post-translationally, complement C3b is rapidly split in two positions by factor I (CFI) and a cofactor (CFH) to form iC3b (inactivated C3b) and C3f which is released. CFI and CFH catalyze proteolytic degradation of already-deposited complement C3b. Then iC3b is slowly cleaved (possibly by CFI) to form C3c (beta chain + alpha' chain fragment 1 + alpha' chain fragment 2), C3dg and C3f. Other proteases produce other fragments such as C3d or C3g. Upon activation, the internal thioester bond reacts with carbohydrate antigens on the target surface to form amide or ester bonds, leading to covalent association with the surface of pathogens. In terms of processing, complement C3b interacts with complement C4b via a thioester linkage. Post-translationally, phosphorylated by FAM20C in the extracellular medium.

It localises to the secreted. It is found in the cell surface. Its activity is regulated as follows. Complement activation is inhibited by VSIG4. Its function is as follows. Precursor of non-enzymatic components of the classical, alternative, lectin and GZMK complement pathways, which consist in a cascade of proteins that leads to phagocytosis and breakdown of pathogens and signaling that strengthens the adaptive immune system. Non-enzymatic component of C5 convertase. Generated following cleavage by C3 convertase, it covalently attaches to the surface of pathogens, where it acts as an opsonin that marks the surface of antigens for removal. Complement C3b binds covalently via its reactive thioester, to cell surface carbohydrates or immune aggregates. Together with complement C4b, it then recruits the serine protease complement C2b to form the C5 convertase, which cleaves and activate C5, the next component of the complement pathways. In the alternative complement pathway, recruits the serine protease CFB to form the C5 convertase that cleaves and activates C5. In terms of biological role, mediator of local inflammatory process released following cleavage by C3 convertase. Acts by binding to its receptor, C3AR1, activating G protein-coupled receptor signaling, promoting the phosphorylation, ARRB2-mediated internalization and endocytosis of C3AR1. C3a anaphylatoxin stimulates the activation of immune cells such as mast cells and basophilic leukocytes to release inflammation agents, such as cytokines, chemokines and histamine, which promote inflammation development. Also acts as potent chemoattractant for the migration of macrophages and neutrophils to the inflamed tissues, resulting in neutralization of the inflammatory triggers by multiple ways, such as phagocytosis and generation of reactive oxidants. Functionally, adipogenic hormone that stimulates triglyceride synthesis and glucose transport in adipocytes, regulating fat storage and playing a role in postprandial triglyceride clearance. Appears to stimulate triglyceride synthesis via activation of the PLC, MAPK and AKT signaling pathways. Acts by binding to its receptor, C5AR2, activating G protein-coupled receptor signaling, promoting the phosphorylation, ARRB2-mediated internalization and endocytosis of C5AR2. Its function is as follows. Acts as a chemoattractant for neutrophils in chronic inflammation. The sequence is that of Complement C3 from Cavia porcellus (Guinea pig).